The chain runs to 92 residues: Small ribosomal subunit protein uS19 (92 aa).

This sequence belongs to the universal ribosomal protein uS19 family.

Functionally, protein S19 forms a complex with S13 that binds strongly to the 16S ribosomal RNA. The protein is Small ribosomal subunit protein uS19 of Photorhabdus laumondii subsp. laumondii (strain DSM 15139 / CIP 105565 / TT01) (Photorhabdus luminescens subsp. laumondii).